The sequence spans 361 residues: MLYWLTQLLQGQYHAFRVFQYLTFRSILASLTALIVGLLCGPLMIRWLRGLQIGQMVRSDGPQTHLSKAGTPTMGGVLILLAITVSCLLWCDLRQTSLWLVLLVTLANGLVGWVDDYRKLVLKNSKGLPGRWKYFWQSVIALVAVSYLYWNASLPVHTQLTAPFFKTVTWDLGIFFPVLAYFVIVGSSNAVNLTDGLDGLAIMPIVMVAGALGVFAYASSNAVYSNYLGIPYVPNTGELTIFCSSIVGAGLGFLWYNSYPAQVFMGDVGSLALGAALGIVAVVVRQELVLLIMGGLFVIETLSVILQVGYFKYSGGKRLFRMAPLHHHFELKGWSEPKVIVRFWIITVVFVLCGLATLKLR.

10 helical membrane-spanning segments follow: residues 27-47 (ILASLTALIVGLLCGPLMIRW), 70-90 (GTPTMGGVLILLAITVSCLLW), 97-117 (SLWLVLLVTLANGLVGWVDDY), 134-154 (YFWQSVIALVAVSYLYWNASL), 167-187 (TVTWDLGIFFPVLAYFVIVGS), 199-219 (GLAIMPIVMVAGALGVFAYAS), 236-256 (TGELTIFCSSIVGAGLGFLWY), 263-283 (VFMGDVGSLALGAALGIVAVV), 288-308 (LVLLIMGGLFVIETLSVILQV), and 338-358 (KVIVRFWIITVVFVLCGLATL).

Belongs to the glycosyltransferase 4 family. MraY subfamily. It depends on Mg(2+) as a cofactor.

It localises to the cell inner membrane. It carries out the reaction UDP-N-acetyl-alpha-D-muramoyl-L-alanyl-gamma-D-glutamyl-meso-2,6-diaminopimeloyl-D-alanyl-D-alanine + di-trans,octa-cis-undecaprenyl phosphate = di-trans,octa-cis-undecaprenyl diphospho-N-acetyl-alpha-D-muramoyl-L-alanyl-D-glutamyl-meso-2,6-diaminopimeloyl-D-alanyl-D-alanine + UMP. Its pathway is cell wall biogenesis; peptidoglycan biosynthesis. In terms of biological role, catalyzes the initial step of the lipid cycle reactions in the biosynthesis of the cell wall peptidoglycan: transfers peptidoglycan precursor phospho-MurNAc-pentapeptide from UDP-MurNAc-pentapeptide onto the lipid carrier undecaprenyl phosphate, yielding undecaprenyl-pyrophosphoryl-MurNAc-pentapeptide, known as lipid I. The polypeptide is Phospho-N-acetylmuramoyl-pentapeptide-transferase (Legionella pneumophila (strain Lens)).